Reading from the N-terminus, the 327-residue chain is dTDP-4-dehydrorhamnose reductase (327 aa).

The segment at 1 to 22 (MDLINGMGTSPGYWRTPREPGN) is disordered. NADH contacts are provided by residues 43 to 45 (GMV), 69 to 70 (DI), and 91 to 93 (AYT). NADPH is bound by residues 44–45 (MV), 69–70 (DI), and 91–93 (AYT). A dTDP-beta-L-rhamnose-binding site is contributed by 132 to 133 (TD). Residues tyrosine 157 and lysine 161 each contribute to the NADH site. NADPH contacts are provided by tyrosine 157 and lysine 161. The active-site Proton donor/acceptor is the tyrosine 157. DTDP-beta-L-rhamnose is bound at residue tryptophan 182. Positions 264–276 (PERVRPCGSDRHP) are enriched in basic and acidic residues. The tract at residues 264–292 (PERVRPCGSDRHPRPAPRPSYTVLSSQRS) is disordered.

It belongs to the dTDP-4-dehydrorhamnose reductase family. It depends on Mg(2+) as a cofactor.

The enzyme catalyses dTDP-beta-L-rhamnose + NADP(+) = dTDP-4-dehydro-beta-L-rhamnose + NADPH + H(+). It functions in the pathway carbohydrate biosynthesis; dTDP-L-rhamnose biosynthesis. Involved in the biosynthesis of the dTDP-L-rhamnose which is a component of the critical linker, D-N-acetylglucosamine-L-rhamnose disaccharide, which connects the galactan region of arabinogalactan to peptidoglycan via a phosphodiester linkage. Catalyzes the reduction of dTDP-6-deoxy-L-lyxo-4-hexulose to yield dTDP-L-rhamnose. The sequence is that of dTDP-4-dehydrorhamnose reductase from Mycolicibacterium smegmatis (strain ATCC 700084 / mc(2)155) (Mycobacterium smegmatis).